The following is a 365-amino-acid chain: MIVEELKLINYRNYEQMNLKFHPRLNVFIGDNAQGKTNLIESIYLCSAGKSFRTNHDQELINMNKKQAYIHVKVKKVHSDVHIEVRLNSERKKDLKVNQIPLVKMGELLGNLNVVLFSPEDLKLVKEGPSERRRFMDREISQISTKFYYTLSQYNKILQHRNKLLKYNKGKEIDIEVWDEQLAAAGAWLIVYRRNFIKKISILAKLMHRKITESIENLEVIYEPNVKVKENDEVDVIKEKILQNLKENFNVDKQRGLTTCGPHRDDMILKINGLDVKTYGSQGQQRTAVLSLKLAELELVKGEVGEYPILLLDDVMSELDSKRQHYLIHNLKSVQTFITTTMMETLKDLKPEDRAVFYVNKGQID.

An ATP-binding site is contributed by 30–37 (GDNAQGKT).

The protein belongs to the RecF family.

It localises to the cytoplasm. Its function is as follows. The RecF protein is involved in DNA metabolism; it is required for DNA replication and normal SOS inducibility. RecF binds preferentially to single-stranded, linear DNA. It also seems to bind ATP. The sequence is that of DNA replication and repair protein RecF from Alkaliphilus oremlandii (strain OhILAs) (Clostridium oremlandii (strain OhILAs)).